A 91-amino-acid chain; its full sequence is MEVVPVQIAAATTTTLILPVVIAFAVCILSIVLIILISDFLVYTSVLVLTLLLYLLLWLLLTTPLQFFLLTLCVCYFPAFYIHIYIVQTQQ.

This sequence belongs to the papillomaviridae E5A protein family.

The sequence is that of Probable protein E5A from Homo sapiens (Human).